The chain runs to 184 residues: GTP cyclohydrolase 1 (184 aa).

Positions 75, 78, and 146 each coordinate Zn(2+).

Belongs to the GTP cyclohydrolase I family. As to quaternary structure, toroid-shaped homodecamer, composed of two pentamers of five dimers.

The enzyme catalyses GTP + H2O = 7,8-dihydroneopterin 3'-triphosphate + formate + H(+). It participates in cofactor biosynthesis; 7,8-dihydroneopterin triphosphate biosynthesis; 7,8-dihydroneopterin triphosphate from GTP: step 1/1. In Pseudoalteromonas translucida (strain TAC 125), this protein is GTP cyclohydrolase 1.